The sequence spans 481 residues: Dual specificity protein kinase CLK4 (481 aa).

Disordered regions lie at residues 1-47 (MRHS…KPHH) and 102-143 (SKSS…EDDE). A compositionally biased stretch (basic and acidic residues) spans 8–19 (HCPDWDSRESWG). Composition is skewed to basic residues over residues 106 to 119 (VRSR…KRNR) and 126 to 136 (SHSKSHRRKRS). Phosphoserine is present on residues serine 136 and serine 138. Residues 159-475 (YEIVDTLGEG…LDEALQHPFF (317 aa)) enclose the Protein kinase domain. Residues 165–173 (LGEGAFGKV) and lysine 189 each bind ATP. The active-site Proton acceptor is aspartate 286.

It belongs to the protein kinase superfamily. CMGC Ser/Thr protein kinase family. Lammer subfamily. As to quaternary structure, interacts with UBL5. Autophosphorylates on all three types of residues. As to expression, expressed in the hippocampus, the cerebellum and the olfactory bulb.

It is found in the nucleus. The catalysed reaction is L-seryl-[protein] + ATP = O-phospho-L-seryl-[protein] + ADP + H(+). It carries out the reaction L-threonyl-[protein] + ATP = O-phospho-L-threonyl-[protein] + ADP + H(+). It catalyses the reaction L-tyrosyl-[protein] + ATP = O-phospho-L-tyrosyl-[protein] + ADP + H(+). TG003 inhibits its kinase activity and affects the regulation of alternative splicing mediated by phosphorylation of SR proteins. Its function is as follows. Dual specificity kinase acting on both serine/threonine and tyrosine-containing substrates. Phosphorylates serine- and arginine-rich (SR) proteins of the spliceosomal complex and may be a constituent of a network of regulatory mechanisms that enable SR proteins to control RNA splicing. Phosphorylates SRSF1 and SRSF3. Required for the regulation of alternative splicing of MAPT/TAU. Regulates the alternative splicing of tissue factor (F3) pre-mRNA in endothelial cells. This Mus musculus (Mouse) protein is Dual specificity protein kinase CLK4 (Clk4).